The chain runs to 360 residues: MVAVRVLAAMSGGVDSAVAAARAVAAGHDVTGVHLALARNPQTYRTGARGCCTLEDSRDARRAADVIGIPFYVWDMAERFQADVVDDFVAEYAAGRTPNPCLRCNEKIKFAAVLDRAVALGFDAVVTGHHARLGADGLLRRSVDLAKDQSYVLGVLTREQLGRSMFPLGDSTKTQVRAEATGRGLTVADKPDSHDICFVADGDTRGFLAERLGATPGDVVDSSTGAVVGRHTGAYAYTVGQRRGLHLDRPAPDGRPRYVLSITPKTNTVTVGPAEALAVSQVRAQRPVWTGGPRPADPIECEVQLRAHGDVVPATVAVTGDGLRAELHRPVRGVAAGQAIVAYRPDPGGDVVLGSATIAA.

ATP contacts are provided by residues 9–16 and Leu-35; that span reads AMSGGVDS. Cys-104 serves as the catalytic Nucleophile. The cysteines at positions 104 and 197 are disulfide-linked. Gly-128 serves as a coordination point for ATP. The segment at 147-149 is interaction with tRNA; it reads KDQ. The active-site Cysteine persulfide intermediate is the Cys-197.

The protein belongs to the MnmA/TRMU family.

Its subcellular location is the cytoplasm. The enzyme catalyses S-sulfanyl-L-cysteinyl-[protein] + uridine(34) in tRNA + AH2 + ATP = 2-thiouridine(34) in tRNA + L-cysteinyl-[protein] + A + AMP + diphosphate + H(+). Its function is as follows. Catalyzes the 2-thiolation of uridine at the wobble position (U34) of tRNA, leading to the formation of s(2)U34. The polypeptide is tRNA-specific 2-thiouridylase MnmA (Salinispora arenicola (strain CNS-205)).